The sequence spans 154 residues: Transcription antitermination protein NusB (154 aa).

It belongs to the NusB family.

Functionally, involved in transcription antitermination. Required for transcription of ribosomal RNA (rRNA) genes. Binds specifically to the boxA antiterminator sequence of the ribosomal RNA (rrn) operons. This Bordetella parapertussis (strain 12822 / ATCC BAA-587 / NCTC 13253) protein is Transcription antitermination protein NusB.